The sequence spans 252 residues: MNRNFSIDAILARKPVEKRKQIITKDNCKFIRVFLQSSNLWRRFHNLGTEMIVTKSGRRMFPTLSVIIAGLDPVKSYVVMVDLECIEMKRFRYSFHQSKWISTGPGESELPSRMFVHTDSPARGAHWMRAPVSFDKMKLTNNQLDNNGHIIVNSMHKYRPRVHIIEQDDSQKRHTFSFEETEFIAVTAYQNHRITSLKIESNPFAKGFRECEVQGIEMNSVGGMTGGPAFQSVFPLIFPYFANLASNMNVNK.

The segment at residues 40 to 210 is a DNA-binding region (T-box); the sequence is LWRRFHNLGT…SNPFAKGFRE (171 aa).

As to quaternary structure, may interact with unc-37.

The protein resides in the nucleus. In terms of biological role, probable transcription factor required for the cell fate specification of non-striated uterine muscle precursor cells. Furthermore, may function with the transcriptional corepressor unc-37. This is T-box transcription factor mls-1 from Caenorhabditis elegans.